The following is a 156-amino-acid chain: Succinate dehydrogenase assembly factor 2-B, mitochondrial (156 aa).

Residues 1 to 24 (MLRQFIVSTVGRRLQLPMMAQSRL) constitute a mitochondrion transit peptide.

This sequence belongs to the SDHAF2 family. As to quaternary structure, interacts with the flavoprotein subunit within the SDH catalytic dimer.

The protein resides in the mitochondrion matrix. Plays an essential role in the assembly of succinate dehydrogenase (SDH), an enzyme complex (also referred to as respiratory complex II) that is a component of both the tricarboxylic acid (TCA) cycle and the mitochondrial electron transport chain, and which couples the oxidation of succinate to fumarate with the reduction of ubiquinone (coenzyme Q) to ubiquinol. Required for flavinylation (covalent attachment of FAD) of the flavoprotein subunit of the SDH catalytic dimer. This is Succinate dehydrogenase assembly factor 2-B, mitochondrial from Drosophila melanogaster (Fruit fly).